The following is a 410-amino-acid chain: MNKEVIPVTEIPKFQSRAEEFFPIQWYKEMLNNSPVYFHEETNTWNVFQYEHVKQVLSNYDFFSSDGQRTTIFVGDNSKKKSTSPITNLTNLDPPDHRKARSLLAAAFTPRSLKNWEPRIKQIAADLVEAIQKNSTINIVDDLSSPFPSLVIADLFGVPVKDRYQFKKWVDILFQPYDQERLEEIEQEKQRAGAEYFQYLYPIVIEKRSNLSDDIISDLIQAEVDGETFTDEEIVHATMLLLGAGVETTSHAIANMFYSFLYDDKSLYSELRNNRELAPKAVEEMLRYRFHISRRDRTVKQDNELLGVKLKKGDVVIAWMSACNMDETMFENPFSVDIHRPTNKKHLTFGNGPHFCLGAPLARLEMKIILEAFLEAFSHIEPFEDFELEPHLTASATGQSLTYLPMTVYR.

Cys356 contributes to the heme binding site.

It belongs to the cytochrome P450 family. It depends on heme as a cofactor.

It localises to the cytoplasm. Cytochromes P450 are a group of heme-thiolate monooxygenases. They oxidize a variety of structurally unrelated compounds, including steroids, fatty acids, and xenobiotics. This chain is Cytochrome P450(BM-1) (cyp106), found in Priestia megaterium (strain ATCC 14581 / DSM 32 / CCUG 1817 / JCM 2506 / NBRC 15308 / NCIMB 9376 / NCTC 10342 / NRRL B-14308 / VKM B-512 / Ford 19) (Bacillus megaterium).